The following is a 1082-amino-acid chain: Error-prone DNA polymerase (1082 aa).

This sequence belongs to the DNA polymerase type-C family. DnaE2 subfamily.

It is found in the cytoplasm. The catalysed reaction is DNA(n) + a 2'-deoxyribonucleoside 5'-triphosphate = DNA(n+1) + diphosphate. DNA polymerase involved in damage-induced mutagenesis and translesion synthesis (TLS). It is not the major replicative DNA polymerase. The protein is Error-prone DNA polymerase of Xanthomonas campestris pv. campestris (strain B100).